The chain runs to 102 residues: Anti-lipopolysaccharide factor (102 aa).

Residues Cys32 and Cys53 are joined by a disulfide bond.

In terms of biological role, binds tightly to LPS and thus specifically inhibits the LPS-mediated activation of the hemolymph coagulation. It has a strong antibacterial effect especially on the growth of Gram-negative bacteria. This Tachypleus tridentatus (Japanese horseshoe crab) protein is Anti-lipopolysaccharide factor.